The primary structure comprises 326 residues: Transposase InsH for insertion sequence element IS5A (326 aa).

The protein belongs to the transposase 11 family.

Functionally, involved in the transposition of the insertion sequence IS5. In Escherichia coli (strain K12), this protein is Transposase InsH for insertion sequence element IS5A (insH1).